Consider the following 441-residue polypeptide: Transcriptional regulatory protein ZraR (441 aa).

The Response regulatory domain occupies 7 to 121 (DILVVDDDVS…RLQETLEKAL (115 aa)). 4-aspartylphosphate is present on Asp56. Residues 141 to 370 (MIGSSPAMQH…LENAIERAVV (230 aa)) form the Sigma-54 factor interaction domain. ATP-binding residues include Gly172, Thr173, Arg329, and Arg359. A DNA-binding region (H-T-H motif) is located at residues 421–440 (KTEAARQLGITRKTLLAKLS).

Phosphorylated by ZraS.

The protein localises to the cytoplasm. With respect to regulation, activity of the ZraS/ZraR two-component system is repressed by the zinc-bound form of ZraP, which probably interacts with the periplasmic region of ZraS. Part of the Zra signaling pathway, an envelope stress response (ESR) system composed of the periplasmic accessory protein ZraP, the histidine kinase ZraS and the transcriptional regulator ZraR. The ZraPSR system contributes to antibiotic resistance and is important for membrane integrity in the presence of membrane-targeting biocides. ZraR is a member of the two-component regulatory system ZraS/ZraR. When activated by ZraS, acts in conjunction with sigma-54 to regulate the expression of zraP in the presence of high Zn(2+) or Pb(2+) concentrations. Also positively autoregulates the expression of the zraSR operon. This Salmonella typhi protein is Transcriptional regulatory protein ZraR (zraR).